The following is a 383-amino-acid chain: S-adenosylmethionine synthase (383 aa).

H16 contributes to the ATP binding site. D18 is a binding site for Mg(2+). Position 44 (E44) interacts with K(+). Residues E57 and Q98 each coordinate L-methionine. The segment at 98–108 (QSPDIAMGVDI) is flexible loop. Residues 158–160 (DQK), 226–227 (RF), D235, 241–242 (RK), A258, and K262 each bind ATP. An L-methionine-binding site is contributed by D235. K266 lines the L-methionine pocket.

Belongs to the AdoMet synthase family. As to quaternary structure, homotetramer; dimer of dimers. Requires Mg(2+) as cofactor. K(+) serves as cofactor.

Its subcellular location is the cytoplasm. It carries out the reaction L-methionine + ATP + H2O = S-adenosyl-L-methionine + phosphate + diphosphate. Its pathway is amino-acid biosynthesis; S-adenosyl-L-methionine biosynthesis; S-adenosyl-L-methionine from L-methionine: step 1/1. In terms of biological role, catalyzes the formation of S-adenosylmethionine (AdoMet) from methionine and ATP. The overall synthetic reaction is composed of two sequential steps, AdoMet formation and the subsequent tripolyphosphate hydrolysis which occurs prior to release of AdoMet from the enzyme. In Fusobacterium nucleatum subsp. nucleatum (strain ATCC 25586 / DSM 15643 / BCRC 10681 / CIP 101130 / JCM 8532 / KCTC 2640 / LMG 13131 / VPI 4355), this protein is S-adenosylmethionine synthase.